A 1770-amino-acid polypeptide reads, in one-letter code: Transposon Ty2-LR1 Gag-Pol polyprotein (1770 aa).

Composition is skewed to polar residues over residues 1–11, 19–39, and 49–60; these read MESQQLHQNPH, ASVT…SASN, and KVNSQQETTPGT. Disordered stretches follow at residues 1 to 86 and 359 to 453; these read MESQ…GQYQ and QHSE…LPDH. The interval 295–397 is RNA-binding; it reads ENNINVSDRL…SSKPRAAKAH (103 aa). Positions 369–381 are enriched in low complexity; that stretch reads TSPNTTNTKVTTR. 2 stretches are compositionally biased toward polar residues: residues 399–408 and 415–435; these read IATSSKFSRV and ESTV…GQQQ. Asp-457 acts as the For protease activity; shared with dimeric partner in catalysis. The segment at 579-636 is integrase-type zinc finger-like; that stretch reads NVNKSKSVNKYPYPLIHRMLGHANFRSIQKSLKKNAVTYLKESDIEWSNASTYQCPDC. In terms of domain architecture, Integrase catalytic spans 656 to 831; the sequence is ESYEPFQYLH…AGLDITTILP (176 aa). Positions 667 and 732 each coordinate Mg(2+). 4 disordered regions span residues 1005–1038, 1058–1135, 1146–1165, and 1170–1205; these read GGTI…MIDL, GTEE…KSSK, LPLP…VSKD, and HSRQ…TEIE. 2 stretches are compositionally biased toward polar residues: residues 1009–1024 and 1065–1082; these read ESDT…FTAR and QRNS…STPS. Residues 1151–1165 show a composition bias toward basic and acidic residues; it reads LTHKSPTDTSDVSKD. The Bipartite nuclear localization signal signature appears at 1193–1227; the sequence is KKRSLEDNETEIEVSRDTWNNKNMRSLEPPRSKKR. The region spanning 1353–1491 is the Reverse transcriptase Ty1/copia-type domain; that stretch reads NDYYITQLDI…DILGLEIKYQ (139 aa). The Mg(2+) site is built by Asp-1361, Asp-1442, Asp-1443, Asp-1625, Glu-1667, and Asp-1700. The RNase H Ty1/copia-type domain occupies 1625–1767; sequence DASYGNQPYY…IKTFKLLTNK (143 aa).

The capsid protein forms a homotrimer, from which the VLPs are assembled. The protease is a homodimer, whose active site consists of two apposed aspartic acid residues. Initially, virus-like particles (VLPs) are composed of the structural unprocessed proteins Gag and Gag-Pol, and also contain the host initiator methionine tRNA (tRNA(i)-Met) which serves as a primer for minus-strand DNA synthesis, and a dimer of genomic Ty RNA. Processing of the polyproteins occurs within the particle and proceeds by an ordered pathway, called maturation. First, the protease (PR) is released by autocatalytic cleavage of the Gag-Pol polyprotein, and this cleavage is a prerequisite for subsequent processing at the remaining sites to release the mature structural and catalytic proteins. Maturation takes place prior to the RT reaction and is required to produce transposition-competent VLPs.

It is found in the cytoplasm. The protein resides in the nucleus. The catalysed reaction is DNA(n) + a 2'-deoxyribonucleoside 5'-triphosphate = DNA(n+1) + diphosphate. It carries out the reaction Endonucleolytic cleavage to 5'-phosphomonoester.. Capsid protein (CA) is the structural component of the virus-like particle (VLP), forming the shell that encapsulates the retrotransposons dimeric RNA genome. The particles are assembled from trimer-clustered units and there are holes in the capsid shells that allow for the diffusion of macromolecules. CA also has nucleocapsid-like chaperone activity, promoting primer tRNA(i)-Met annealing to the multipartite primer-binding site (PBS), dimerization of Ty2 RNA and initiation of reverse transcription. Functionally, the aspartyl protease (PR) mediates the proteolytic cleavages of the Gag and Gag-Pol polyproteins after assembly of the VLP. Its function is as follows. Reverse transcriptase/ribonuclease H (RT) is a multifunctional enzyme that catalyzes the conversion of the retro-elements RNA genome into dsDNA within the VLP. The enzyme displays a DNA polymerase activity that can copy either DNA or RNA templates, and a ribonuclease H (RNase H) activity that cleaves the RNA strand of RNA-DNA heteroduplexes during plus-strand synthesis and hydrolyzes RNA primers. The conversion leads to a linear dsDNA copy of the retrotransposon that includes long terminal repeats (LTRs) at both ends. In terms of biological role, integrase (IN) targets the VLP to the nucleus, where a subparticle preintegration complex (PIC) containing at least integrase and the newly synthesized dsDNA copy of the retrotransposon must transit the nuclear membrane. Once in the nucleus, integrase performs the integration of the dsDNA into the host genome. In Saccharomyces cerevisiae (strain ATCC 204508 / S288c) (Baker's yeast), this protein is Transposon Ty2-LR1 Gag-Pol polyprotein (TY2B-LR1).